Consider the following 248-residue polypeptide: DNA repair protein RecO (248 aa).

Belongs to the RecO family.

Functionally, involved in DNA repair and RecF pathway recombination. The protein is DNA repair protein RecO of Chelativorans sp. (strain BNC1).